A 663-amino-acid chain; its full sequence is ATP-dependent zinc metalloprotease FtsH (663 aa).

Over 1–12 the chain is Stromal; that stretch reads MNKKETNTSWWR. The chain crosses the membrane as a helical span at residues 13–33; that stretch reads IILISLGISIICILAAFLAMK. The Lumenal segment spans residues 34-135; that stretch reads DGFFVLENNT…HPPKLDIFKT (102 aa). The helical transmembrane segment at 136–156 threads the bilayer; that stretch reads ISDTLGSLIVPGLVVAVFYLF. The Stromal segment spans residues 157–663; the sequence is LERANNNNNN…KIYESKFPKK (507 aa). The tract at residues 165-184 is disordered; it reads NNNSNGSPFGPGGGPNQNMR. 244–251 provides a ligand contact to ATP; that stretch reads GPPGTGKT. Histidine 465 is a Zn(2+) binding site. Glutamate 466 is an active-site residue. Residues histidine 469 and aspartate 543 each contribute to the Zn(2+) site.

It in the central section; belongs to the AAA ATPase family. The protein in the C-terminal section; belongs to the peptidase M41 family. In terms of assembly, homohexamer. The cofactor is Zn(2+).

It is found in the plastid. The protein localises to the chloroplast thylakoid membrane. Its function is as follows. Acts as a processive, ATP-dependent zinc metallopeptidase. The protein is ATP-dependent zinc metalloprotease FtsH of Heterosigma akashiwo (strain NIES-293 / 8280G21-1).